Here is a 92-residue protein sequence, read N- to C-terminus: N(2)-fixation sustaining protein CowN (92 aa).

The protein belongs to the CowN family.

Functionally, is required to sustain N(2)-dependent growth in the presence of low levels of carbon monoxide (CO). Probably acts by protecting the N(2) fixation ability of the nitrogenase complex, which is inactivated in the presence of CO. In Cereibacter sphaeroides (strain ATCC 17025 / ATH 2.4.3) (Rhodobacter sphaeroides), this protein is N(2)-fixation sustaining protein CowN.